Here is a 119-residue protein sequence, read N- to C-terminus: Beta-2-microglobulin (119 aa).

Positions 1 to 20 are cleaved as a signal peptide; that stretch reads MARFVVAALLVLLCLSGLEA. An Ig-like C1-type domain is found at 25-114; the sequence is PKIQVYSRHP…VTFPTPKTVK (90 aa). C45 and C100 are oxidised to a cystine.

Belongs to the beta-2-microglobulin family. In terms of assembly, heterodimer of an alpha chain and a beta chain. Beta-2-microglobulin is the beta-chain of major histocompatibility complex class I molecules.

The protein localises to the secreted. Component of the class I major histocompatibility complex (MHC). Involved in the presentation of peptide antigens to the immune system. The protein is Beta-2-microglobulin (B2M) of Cebus albifrons (White-fronted capuchin).